An 859-amino-acid polypeptide reads, in one-letter code: Sulfate permease 1 (859 aa).

N-linked (GlcNAc...) asparagine glycosylation is found at Asn51 and Asn93. 8 consecutive transmembrane segments (helical) span residues 94 to 114 (LTAK…KWFP), 116 to 136 (YNFT…CVLV), 148 to 168 (LSPE…SLFA), 173 to 193 (VCIG…AEVL), 206 to 226 (PIIA…LGIL), 234 to 254 (LISL…IIWG), 292 to 312 (FGLI…TFGI), and 332 to 352 (FYFY…TAIS). N-linked (GlcNAc...) asparagine glycans are attached at residues Asn358 and Asn391. A run of 4 helical transmembrane segments spans residues 395 to 415 (EIPA…KSFG), 428 to 448 (LIAI…PATG), 468 to 488 (VFTG…FFFI), and 525 to 545 (FIVT…YFAM). 3 N-linked (GlcNAc...) asparagine glycosylation sites follow: Asn630, Asn653, and Asn718. The STAS domain maps to 630 to 808 (NTTVRPPPPG…SIIAGHSSFH (179 aa)).

It belongs to the SLC26A/SulP transporter (TC 2.A.53) family.

It localises to the membrane. High affinity uptake of sulfate into the cell. The protein is Sulfate permease 1 (SUL1) of Saccharomyces cerevisiae (strain ATCC 204508 / S288c) (Baker's yeast).